A 187-amino-acid chain; its full sequence is NAC domain-containing protein 104 (187 aa).

The region spanning Leu3–Gln155 is the NAC domain. Residues Val94–Glu161 mediate DNA binding. The disordered stretch occupies residues Leu118–Pro142.

Expressed in root xylem vessels. Expressed in stems, vascular tissue of cauline leaves and tracheary elements of sepals.

The protein resides in the nucleus. Functionally, probable transcription factor that influences tracheary elements and xylem development by negatively regulating secondary cell wall fiber synthesis and programmed cell death. This is NAC domain-containing protein 104 from Arabidopsis thaliana (Mouse-ear cress).